The sequence spans 320 residues: Ferrochelatase (320 aa).

Residues His-194 and Glu-275 each contribute to the Fe cation site.

Belongs to the ferrochelatase family.

The protein resides in the cytoplasm. The catalysed reaction is heme b + 2 H(+) = protoporphyrin IX + Fe(2+). It functions in the pathway porphyrin-containing compound metabolism; protoheme biosynthesis; protoheme from protoporphyrin-IX: step 1/1. Functionally, catalyzes the ferrous insertion into protoporphyrin IX. The sequence is that of Ferrochelatase from Klebsiella pneumoniae (strain 342).